We begin with the raw amino-acid sequence, 330 residues long: N-acetyl-gamma-glutamyl-phosphate reductase (330 aa).

The active site involves Cys-143.

This sequence belongs to the NAGSA dehydrogenase family. Type 1 subfamily.

The protein localises to the cytoplasm. The catalysed reaction is N-acetyl-L-glutamate 5-semialdehyde + phosphate + NADP(+) = N-acetyl-L-glutamyl 5-phosphate + NADPH + H(+). It participates in amino-acid biosynthesis; L-arginine biosynthesis; N(2)-acetyl-L-ornithine from L-glutamate: step 3/4. Catalyzes the NADPH-dependent reduction of N-acetyl-5-glutamyl phosphate to yield N-acetyl-L-glutamate 5-semialdehyde. This is N-acetyl-gamma-glutamyl-phosphate reductase from Methanocorpusculum labreanum (strain ATCC 43576 / DSM 4855 / Z).